The chain runs to 199 residues: dITP/XTP pyrophosphatase (199 aa).

8 to 13 (SGNAGK) contributes to the substrate binding site. The active-site Proton acceptor is D69. D69 contributes to the Mg(2+) binding site. Residues S70, 154-157 (FGYN), K177, and 182-183 (HR) contribute to the substrate site.

The protein belongs to the HAM1 NTPase family. As to quaternary structure, homodimer. Requires Mg(2+) as cofactor.

The catalysed reaction is XTP + H2O = XMP + diphosphate + H(+). It catalyses the reaction dITP + H2O = dIMP + diphosphate + H(+). It carries out the reaction ITP + H2O = IMP + diphosphate + H(+). Pyrophosphatase that catalyzes the hydrolysis of nucleoside triphosphates to their monophosphate derivatives, with a high preference for the non-canonical purine nucleotides XTP (xanthosine triphosphate), dITP (deoxyinosine triphosphate) and ITP. Seems to function as a house-cleaning enzyme that removes non-canonical purine nucleotides from the nucleotide pool, thus preventing their incorporation into DNA/RNA and avoiding chromosomal lesions. The chain is dITP/XTP pyrophosphatase from Xanthomonas axonopodis pv. citri (strain 306).